A 95-amino-acid polypeptide reads, in one-letter code: Small ubiquitin-related modifier 4 (95 aa).

The region spanning 17–95 is the Ubiquitin-like domain; it reads HINLKVAGQD…VLQQQTGGVY (79 aa). Gly93 participates in a covalent cross-link: Glycyl lysine isopeptide (Gly-Lys) (interchain with K-? in acceptor proteins). A propeptide spanning residues 94 to 95 is cleaved from the precursor; it reads VY.

This sequence belongs to the ubiquitin family. SUMO subfamily. In terms of assembly, interacts with SAE2. Covalently attached to a number of proteins.

Ubiquitin-like protein which can be covalently attached to target lysines as a monomer. Does not seem to be involved in protein degradation and may modulate protein subcellular localization, stability or activity. Upon oxidative stress, conjugates to various anti-oxidant enzymes, chaperones, and stress defense proteins. May also conjugate to NFKBIA, TFAP2A and FOS, negatively regulating their transcriptional activity, and to NR3C1, positively regulating its transcriptional activity. Covalent attachment to its substrates requires prior activation by the E1 complex SAE1-SAE2 and linkage to the E2 enzyme UBE2I. In Sus scrofa (Pig), this protein is Small ubiquitin-related modifier 4 (SUMO4).